A 282-amino-acid chain; its full sequence is Bis(5'-nucleosyl)-tetraphosphatase, symmetrical (282 aa).

This sequence belongs to the Ap4A hydrolase family.

The catalysed reaction is P(1),P(4)-bis(5'-adenosyl) tetraphosphate + H2O = 2 ADP + 2 H(+). In terms of biological role, hydrolyzes diadenosine 5',5'''-P1,P4-tetraphosphate to yield ADP. The chain is Bis(5'-nucleosyl)-tetraphosphatase, symmetrical from Burkholderia thailandensis (strain ATCC 700388 / DSM 13276 / CCUG 48851 / CIP 106301 / E264).